Here is a 341-residue protein sequence, read N- to C-terminus: Acetylpolyamine amidohydrolase (341 aa).

Residues Tyr-19, Glu-106, and Glu-117 each contribute to the substrate site. His-159 acts as the Proton donor/acceptor in catalysis. Positions 195, 197, and 284 each coordinate Zn(2+). Tyr-323 serves as a coordination point for substrate.

The protein belongs to the histone deacetylase family. Homodimer. Zn(2+) is required as a cofactor.

The enzyme catalyses N-acetylputrescine + H2O = putrescine + acetate. It catalyses the reaction N-acetylcadaverine + H2O = cadaverine + acetate. The catalysed reaction is N(1)-acetylspermine + H2O = spermine + acetate. It carries out the reaction N(1)-acetylspermidine + H2O = spermidine + acetate. The enzyme catalyses N(8)-acetylspermidine + H2O = spermidine + acetate. The protein operates within amine and polyamine metabolism. Zinc ions inhibit enzyme activity in a dose-dependent manner. Inhibited by KCl at concentrations above 10 mM. Inhibited by o-oxyquinoline in vitro, suggesting that it is a metalloprotein. Inhibited by various substrate N(8)-acetylspermidine analogs bearing different metal-binding groups such as trifluoromethylketone, thiol, or hydroxamate, and by hydroxamate analogs of short-chain acetyldiamines. Its function is as follows. Involved in polyamine metabolism. Catalyzes the deacetylation of various acetylated polyamines such as N-acetylputrescine, N-acetylcadaverine, N(1)-acetylspermine, N(1)-acetylspermidine and N(8)-acetylspermidine. In vitro, is also able to deacetylate L-Lys(epsilon-acetyl)coumarin, but has very low activity towards the larger tetrapeptide N-acetyl-L-Arg-L-His-L-Lys(epsilon-acetyl)-L-Lys(epsilon-acetyl)coumarin. This is Acetylpolyamine amidohydrolase from Mycoplana ramosa (Mycoplana bullata).